The primary structure comprises 56 residues: uncharacterized protein (56 aa).

This is an uncharacterized protein from Acidianus convivator (ABV).